Reading from the N-terminus, the 240-residue chain is Lactate utilization protein C (240 aa).

It belongs to the LutC/YkgG family.

In terms of biological role, is involved in L-lactate degradation and allows cells to grow with lactate as the sole carbon source. This chain is Lactate utilization protein C, found in Geobacillus thermodenitrificans (strain NG80-2).